Consider the following 411-residue polypeptide: GPI-anchor transamidase (411 aa).

The N-terminal stretch at M1–A22 is a signal peptide. Residues N23–T376 are Lumenal-facing. Active-site residues include H157 and C199. 2 N-linked (GlcNAc...) asparagine glycosylation sites follow: N256 and N346. A helical transmembrane segment spans residues S377–L397. Residues R398–N411 are Cytoplasmic-facing.

Belongs to the peptidase C13 family. Forms a complex with CDC91, GPI16, GPI17 and GAA1. In terms of processing, the disulfide bond between GPI8 and GPI16 is important for normal enzyme activity.

The protein resides in the endoplasmic reticulum membrane. Its pathway is glycolipid biosynthesis; glycosylphosphatidylinositol-anchor biosynthesis. Mediates GPI anchoring in the endoplasmic reticulum, by replacing a protein's C-terminal GPI attachment signal peptide with a pre-assembled GPI. During this transamidation reaction, the GPI transamidase forms a carbonyl intermediate with the substrate protein. This chain is GPI-anchor transamidase (GPI8), found in Saccharomyces cerevisiae (strain ATCC 204508 / S288c) (Baker's yeast).